We begin with the raw amino-acid sequence, 399 residues long: Developmentally-regulated G-protein 1 (399 aa).

The OBG-type G domain maps to 63–288 (GRVALIGFPS…LLARMWDEMG (226 aa)). GTP contacts are provided by residues 69–76 (GFPSVGKS), 115–119 (DLPGI), and 246–249 (NKID). The region spanning 288-366 (GLVRVYSKPQ…EDEDVVQIVK (79 aa)) is the TGS domain. Positions 367 to 399 (KKERDEGGRGRFKSHSNAPARIADREKKAPLKQ) are disordered. Residues 388–399 (IADREKKAPLKQ) show a composition bias toward basic and acidic residues.

It belongs to the TRAFAC class OBG-HflX-like GTPase superfamily. OBG GTPase family. As to expression, expressed in actively growing tissues and reproductive organs. Mostly expressed in leaves, stems and siliques. Also present in flowers and flower buds, and, to a lower extent, in roots.

Its subcellular location is the cytoplasmic vesicle. It is found in the cytoplasm. In terms of biological role, binds GDP and GTP, and has low GTPase activity. May interact with phosphatidic acid (PA). This Arabidopsis thaliana (Mouse-ear cress) protein is Developmentally-regulated G-protein 1 (DRG1).